Reading from the N-terminus, the 169-residue chain is Alpha-S2-casein-like B (169 aa).

The signal sequence occupies residues 1–15 (MKFIILTCLLAVALA).

This sequence belongs to the alpha-casein family. Mammary gland specific. Secreted in milk.

It is found in the secreted. In terms of biological role, important role in the capacity of milk to transport calcium phosphate. This is Alpha-S2-casein-like B (Csn1s2b) from Rattus norvegicus (Rat).